Consider the following 225-residue polypeptide: NAD(P)H-quinone oxidoreductase subunit K, chloroplastic (225 aa).

Positions 43, 44, 108, and 139 each coordinate [4Fe-4S] cluster.

Belongs to the complex I 20 kDa subunit family. As to quaternary structure, NDH is composed of at least 16 different subunits, 5 of which are encoded in the nucleus. Requires [4Fe-4S] cluster as cofactor.

It localises to the plastid. The protein localises to the chloroplast thylakoid membrane. The enzyme catalyses a plastoquinone + NADH + (n+1) H(+)(in) = a plastoquinol + NAD(+) + n H(+)(out). It catalyses the reaction a plastoquinone + NADPH + (n+1) H(+)(in) = a plastoquinol + NADP(+) + n H(+)(out). NDH shuttles electrons from NAD(P)H:plastoquinone, via FMN and iron-sulfur (Fe-S) centers, to quinones in the photosynthetic chain and possibly in a chloroplast respiratory chain. The immediate electron acceptor for the enzyme in this species is believed to be plastoquinone. Couples the redox reaction to proton translocation, and thus conserves the redox energy in a proton gradient. The chain is NAD(P)H-quinone oxidoreductase subunit K, chloroplastic from Nasturtium officinale (Watercress).